The chain runs to 296 residues: Acetaldehyde dehydrogenase (296 aa).

15–18 (SGNI) is a binding site for NAD(+). Cys-132 acts as the Acyl-thioester intermediate in catalysis. NAD(+) is bound by residues 164–172 (SAGPATRAN) and Asn-274.

It belongs to the acetaldehyde dehydrogenase family. Interacts with MhpE.

The enzyme catalyses acetaldehyde + NAD(+) + CoA = acetyl-CoA + NADH + H(+). Its pathway is aromatic compound metabolism; 3-phenylpropanoate degradation. Functionally, catalyzes the conversion of acetaldehyde to acetyl-CoA, using NAD(+) and coenzyme A. Is the final enzyme in the meta-cleavage pathway for the degradation of aromatic compounds. The polypeptide is Acetaldehyde dehydrogenase (Pectobacterium atrosepticum (strain SCRI 1043 / ATCC BAA-672) (Erwinia carotovora subsp. atroseptica)).